The chain runs to 147 residues: Large ribosomal subunit protein uL15 (147 aa).

The interval 1–57 (MRLEDLRPTPGSMKKRKRVGRGPGSGHGKTSGRGHKGQKARGTGKVHPWFEGGQTPL) is disordered. The span at 30-44 (TSGRGHKGQKARGTG) shows a compositional bias: basic residues.

This sequence belongs to the universal ribosomal protein uL15 family. As to quaternary structure, part of the 50S ribosomal subunit.

In terms of biological role, binds to the 23S rRNA. This Thermotoga neapolitana (strain ATCC 49049 / DSM 4359 / NBRC 107923 / NS-E) protein is Large ribosomal subunit protein uL15.